Here is a 157-residue protein sequence, read N- to C-terminus: Ribosome maturation factor RimP (157 aa).

The protein belongs to the RimP family.

The protein localises to the cytoplasm. In terms of biological role, required for maturation of 30S ribosomal subunits. This Streptococcus thermophilus (strain ATCC BAA-491 / LMD-9) protein is Ribosome maturation factor RimP.